A 624-amino-acid chain; its full sequence is Probable potassium transport system protein Kup (624 aa).

The next 12 helical transmembrane spans lie at 16 to 36, 59 to 79, 106 to 126, 147 to 167, 174 to 194, 211 to 231, 252 to 272, 292 to 312, 342 to 362, 371 to 391, 394 to 414, and 418 to 438; these read ALLTLGALGVVFGDIGTSPLY, IISMVLWTITLIVTVKYVMLV, FVAVAGMLGAALFYGDVVITP, FILPVSLAVLIAIFAIQPLGT, FGPIMLLWFVTLAGLGIPQII, LIVAEPFQAFVLLGAVVLTVT, WFCVVMPALILTYLGQGALVI, IPLVILATIATVIASQAVISG, IYMPLVNGLLFVSVMVVVLVF, AYGLAVTGTLVLVSVLYLIYV, TWWKTALFIVLIGIPEVLLFA, and TKIHDGGWLPLLIAAVLIVVM.

This sequence belongs to the HAK/KUP transporter (TC 2.A.72) family.

It is found in the cell membrane. The catalysed reaction is K(+)(in) + H(+)(in) = K(+)(out) + H(+)(out). In terms of biological role, transport of potassium into the cell. Likely operates as a K(+):H(+) symporter. The protein is Probable potassium transport system protein Kup of Corynebacterium glutamicum (strain ATCC 13032 / DSM 20300 / JCM 1318 / BCRC 11384 / CCUG 27702 / LMG 3730 / NBRC 12168 / NCIMB 10025 / NRRL B-2784 / 534).